Here is a 655-residue protein sequence, read N- to C-terminus: Epithelial sodium channel subunit gamma (655 aa).

Residues 1 to 55 (MAPGEKIKAKIKKNLPVRGPQAPTIKDLMHWYCLNTNTHGCRRIVVSRGRLRRLL) lie on the Cytoplasmic side of the membrane. A helical transmembrane segment spans residues 56–76 (WIAFTLTAVALIIWQCALLVF). Residues 77–547 (SFYTVSVSIK…GGQLGLWMSC (471 aa)) are Extracellular-facing. 8 cysteine pairs are disulfide-bonded: Cys100–Cys289, Cys213–Cys220, Cys266–Cys273, Cys378–Cys463, Cys400–Cys459, Cys404–Cys455, Cys413–Cys440, and Cys415–Cys429. Positions 140-227 (RKRREAGSMR…SDCATYTFSS (88 aa)) are gating release of inhibition by proteolysis (GRIP); protease-sensitive region that is responsible for the proteolytic activation of the channel. N-linked (GlcNAc...) asparagine glycosylation occurs at Asn215. A glycan (N-linked (GlcNAc...) asparagine) is linked at Asn277. Asn503 carries an N-linked (GlcNAc...) asparagine glycan. A helical membrane pass occupies residues 548-568 (SVVCVIEIIEVFFIDFFSIIA). Residues 569-655 (RRQWQKAKDW…LTDTQLTNEF (87 aa)) are Cytoplasmic-facing. The interval 582–636 (RRTPPSTETPSSQQGQDNPALDTDDDLPTFTSAMRLPPAPEAPVPGTPPPRYNTL) is disordered. Residues 585–598 (PPSTETPSSQQGQD) are compositionally biased toward polar residues. The segment covering 618–632 (PPAPEAPVPGTPPPR) has biased composition (pro residues). Positions 629-633 (PPPRY) match the PY motif; recruits WW domain-containing proteins and is thereby required for ubiquitination and inhibition of the channel by NEDD4 and NEDD4L motif.

This sequence belongs to the amiloride-sensitive sodium channel (TC 1.A.6) family. SCNN1G subfamily. As to quaternary structure, component of the heterotrimeric epithelial sodium channel (ENaC) composed of an alpha/SCNN1A, a beta/SCNN1B and a gamma/SCNN1G subunit. Interacts with WWP1 (via WW domains). Interacts with WWP2 (via WW domains); inhibits the channel. Interacts with the full-length immature form of PCSK9 (pro-PCSK9); inhibits ENaC by promoting its proteasomal degradation. Interacts with BPIFA1; the interaction is indirect via SCNN1B and inhibits the proteolytic maturation of SCNN1A and SCNN1G and the activation of ENaC. Phosphorylated on serine and threonine residues. Aldosterone and insulin increase the basal level of phosphorylation. In terms of processing, ubiquitinated. Can be ubiquitinated at multiple sites and undergo monoubiquitination and polyubiquitination. Ubiquitination by NEDD4 or NEDD4L inhibits the ENaC channel through endocytosis, intracellular retention and degradation of its individual subunits. Post-translationally, ENaC is activated through the proteolytic maturation of its subunits. Furin cleaves the SCNN1G subunit first, followed by cleavage by prostasin (PRSS8), which results in a stepwise increase in the open probability of the channel due to the release of an inhibitory tract. BPIFA1, which is recruited by the SCNN1B subunit, prevents the proteolytic activation of ENaC. N-glycosylated. N-linked glycans are processed to complex type during ENaC complex assembly and transport to the plasma membrane. As to expression, lung and kidney.

It is found in the apical cell membrane. It catalyses the reaction Na(+)(in) = Na(+)(out). Originally identified and characterized by its inhibition by the diuretic drug amiloride. In terms of biological role, this is one of the three pore-forming subunits of the heterotrimeric epithelial sodium channel (ENaC), a critical regulator of sodium balance and fluid homeostasis. ENaC operates in epithelial tissues, where it mediates the electrodiffusion of sodium ions from extracellular fluid through the apical membrane of cells, with water following osmotically. It plays a key role in maintaining sodium homeostasis through electrogenic sodium reabsorption in the kidneys. Additionally, ENaC is essential for airway surface liquid homeostasis, which is crucial for proper mucus clearance. The sequence is that of Epithelial sodium channel subunit gamma from Mus musculus (Mouse).